We begin with the raw amino-acid sequence, 292 residues long: 5,10-methylenetetrahydrofolate reductase (292 aa).

E28 functions as the Proton donor/acceptor in the catalytic mechanism. T59 contacts NADH. Positions 60, 62, 88, 118, 119, 120, 132, 152, 156, 165, 168, 171, and 172 each coordinate FAD. D120 is a (6S)-5-methyl-5,6,7,8-tetrahydrofolate binding site. Q183 provides a ligand contact to NADH. Residue Q183 coordinates (6S)-5-methyl-5,6,7,8-tetrahydrofolate.

This sequence belongs to the methylenetetrahydrofolate reductase family. FAD is required as a cofactor.

It carries out the reaction (6S)-5-methyl-5,6,7,8-tetrahydrofolate + NAD(+) = (6R)-5,10-methylene-5,6,7,8-tetrahydrofolate + NADH + H(+). It participates in one-carbon metabolism; tetrahydrofolate interconversion. The protein operates within amino-acid biosynthesis; L-methionine biosynthesis via de novo pathway. Functionally, catalyzes the NADH-dependent reduction of 5,10-methylenetetrahydrofolate to 5-methyltetrahydrofolate. Is required to provide the methyl group necessary for methionine synthetase to convert homocysteine to methionine; the methyl group is given by 5-methyltetrahydrofolate. This is 5,10-methylenetetrahydrofolate reductase (metF) from Buchnera aphidicola subsp. Acyrthosiphon pisum (strain APS) (Acyrthosiphon pisum symbiotic bacterium).